We begin with the raw amino-acid sequence, 262 residues long: Phosphatidylserine decarboxylase proenzyme (262 aa).

Residues Asp86, His142, and Ser226 each act as charge relay system; for autoendoproteolytic cleavage activity in the active site. The Schiff-base intermediate with substrate; via pyruvic acid; for decarboxylase activity role is filled by Ser226. Position 226 is a pyruvic acid (Ser); by autocatalysis (Ser226).

This sequence belongs to the phosphatidylserine decarboxylase family. PSD-B subfamily. Prokaryotic type I sub-subfamily. Heterodimer of a large membrane-associated beta subunit and a small pyruvoyl-containing alpha subunit. Pyruvate is required as a cofactor. In terms of processing, is synthesized initially as an inactive proenzyme. Formation of the active enzyme involves a self-maturation process in which the active site pyruvoyl group is generated from an internal serine residue via an autocatalytic post-translational modification. Two non-identical subunits are generated from the proenzyme in this reaction, and the pyruvate is formed at the N-terminus of the alpha chain, which is derived from the carboxyl end of the proenzyme. The autoendoproteolytic cleavage occurs by a canonical serine protease mechanism, in which the side chain hydroxyl group of the serine supplies its oxygen atom to form the C-terminus of the beta chain, while the remainder of the serine residue undergoes an oxidative deamination to produce ammonia and the pyruvoyl prosthetic group on the alpha chain. During this reaction, the Ser that is part of the protease active site of the proenzyme becomes the pyruvoyl prosthetic group, which constitutes an essential element of the active site of the mature decarboxylase.

It is found in the cell membrane. The catalysed reaction is a 1,2-diacyl-sn-glycero-3-phospho-L-serine + H(+) = a 1,2-diacyl-sn-glycero-3-phosphoethanolamine + CO2. The protein operates within phospholipid metabolism; phosphatidylethanolamine biosynthesis; phosphatidylethanolamine from CDP-diacylglycerol: step 2/2. Functionally, catalyzes the formation of phosphatidylethanolamine (PtdEtn) from phosphatidylserine (PtdSer). The protein is Phosphatidylserine decarboxylase proenzyme of Bacillus thuringiensis (strain Al Hakam).